We begin with the raw amino-acid sequence, 225 residues long: MEQYKKEFIEFMVDCGVLKFGDFTTKSGRKTPFFVNTGFYRTGAQLRKLGEYYAKAIHDAYGLDFDVLFGPAYKGIPLSVATAMSISEHFDKDIKYCSNRKEVKDHGDTGILLGSPISDGDKVVIIEDVTTAGTSIGETMPILSAQGNVDVVGLVVSVDRMERGQGKKSALKEIEENYGIETTAIVTMKEVVEHLYGKPYNGKVVIDDQLKQAIDAYYEQYGVEA.

5-phospho-alpha-D-ribose 1-diphosphate-binding positions include Lys-26, 73 to 74, Arg-100, Lys-101, Lys-104, His-106, and 127 to 135; these read YK and EDVTTAGTS. Orotate-binding residues include Thr-131 and Arg-160.

Belongs to the purine/pyrimidine phosphoribosyltransferase family. PyrE subfamily. As to quaternary structure, homodimer. The cofactor is Mg(2+).

It carries out the reaction orotidine 5'-phosphate + diphosphate = orotate + 5-phospho-alpha-D-ribose 1-diphosphate. It participates in pyrimidine metabolism; UMP biosynthesis via de novo pathway; UMP from orotate: step 1/2. Its function is as follows. Catalyzes the transfer of a ribosyl phosphate group from 5-phosphoribose 1-diphosphate to orotate, leading to the formation of orotidine monophosphate (OMP). The polypeptide is Orotate phosphoribosyltransferase (Lachnoclostridium phytofermentans (strain ATCC 700394 / DSM 18823 / ISDg) (Clostridium phytofermentans)).